Consider the following 380-residue polypeptide: Cytochrome b (380 aa).

The next 4 helical transmembrane spans lie at F34–M54, W78–I99, W114–L134, and F179–T199. Heme b contacts are provided by H84 and H98. Heme b-binding residues include H183 and H197. H202 lines the a ubiquinone pocket. A run of 4 helical transmembrane segments spans residues I227–S247, L289–H309, L321–S341, and F348–P368.

Belongs to the cytochrome b family. As to quaternary structure, the cytochrome bc1 complex contains 11 subunits: 3 respiratory subunits (MT-CYB, CYC1 and UQCRFS1), 2 core proteins (UQCRC1 and UQCRC2) and 6 low-molecular weight proteins (UQCRH/QCR6, UQCRB/QCR7, UQCRQ/QCR8, UQCR10/QCR9, UQCR11/QCR10 and a cleavage product of UQCRFS1). This cytochrome bc1 complex then forms a dimer. Heme b serves as cofactor.

It localises to the mitochondrion inner membrane. Functionally, component of the ubiquinol-cytochrome c reductase complex (complex III or cytochrome b-c1 complex) that is part of the mitochondrial respiratory chain. The b-c1 complex mediates electron transfer from ubiquinol to cytochrome c. Contributes to the generation of a proton gradient across the mitochondrial membrane that is then used for ATP synthesis. This Coturnix japonica (Japanese quail) protein is Cytochrome b (MT-CYB).